The following is a 362-amino-acid chain: UDP-N-acetylglucosamine--N-acetylmuramyl-(pentapeptide) pyrophosphoryl-undecaprenol N-acetylglucosamine transferase (362 aa).

UDP-N-acetyl-alpha-D-glucosamine is bound by residues 10-12 (TGG), Asn-124, Ser-194, Ile-249, and Gln-294.

The protein belongs to the glycosyltransferase 28 family. MurG subfamily.

The protein localises to the cell membrane. The enzyme catalyses Mur2Ac(oyl-L-Ala-gamma-D-Glu-L-Lys-D-Ala-D-Ala)-di-trans,octa-cis-undecaprenyl diphosphate + UDP-N-acetyl-alpha-D-glucosamine = beta-D-GlcNAc-(1-&gt;4)-Mur2Ac(oyl-L-Ala-gamma-D-Glu-L-Lys-D-Ala-D-Ala)-di-trans,octa-cis-undecaprenyl diphosphate + UDP + H(+). It functions in the pathway cell wall biogenesis; peptidoglycan biosynthesis. Cell wall formation. Catalyzes the transfer of a GlcNAc subunit on undecaprenyl-pyrophosphoryl-MurNAc-pentapeptide (lipid intermediate I) to form undecaprenyl-pyrophosphoryl-MurNAc-(pentapeptide)GlcNAc (lipid intermediate II). This Pediococcus pentosaceus (strain ATCC 25745 / CCUG 21536 / LMG 10740 / 183-1w) protein is UDP-N-acetylglucosamine--N-acetylmuramyl-(pentapeptide) pyrophosphoryl-undecaprenol N-acetylglucosamine transferase.